An 893-amino-acid chain; its full sequence is Alanine--tRNA ligase (893 aa).

The protein belongs to the class-II aminoacyl-tRNA synthetase family.

The protein resides in the cytoplasm. The enzyme catalyses tRNA(Ala) + L-alanine + ATP = L-alanyl-tRNA(Ala) + AMP + diphosphate. In terms of biological role, catalyzes the attachment of alanine to tRNA(Ala) in a two-step reaction: alanine is first activated by ATP to form Ala-AMP and then transferred to the acceptor end of tRNA(Ala). Also edits incorrectly charged Ser-tRNA(Ala) and Gly-tRNA(Ala) via its editing domain. This is Alanine--tRNA ligase (alaS) from Leuconostoc mesenteroides subsp. mesenteroides (strain ATCC 8293 / DSM 20343 / BCRC 11652 / CCM 1803 / JCM 6124 / NCDO 523 / NBRC 100496 / NCIMB 8023 / NCTC 12954 / NRRL B-1118 / 37Y).